A 454-amino-acid chain; its full sequence is MYCRRSHLKKPSMSHRTHDYWIAHQGTPLHGVLSIPGDKSISHRAVMFAALADGTSRIDGFLEAEDTCSTAEILARLGVRIETPLSTQRIVHGVGVDGLQASHIPLDCGNAGTGMRLLAGLLVAQPFDSVLVGDASLSKRPMRRVTDPLSQMGARIDTSDDGTPPLRIYGGQLLHGIDFISPVASAQIKSAVLLAGLYARNETVVREPHPTRDYTERMLTAFGVDIDVSTGCARLRGGQRLCATDITIPADFSSAAFYLVAASVIPGSDITLRAVGLNPRRIGLLTVLRLMGANIVESNRHEQGGEPVVDLRVRYAPLQGTRVPEDLVADMIDEFPALFVAAAAAEGQTVVSGAAELRVKESDRLAAMVTGLRVLGVQVDETADGATIHGGPIGHGTINSHGDHRIAMAFSIAGQLSVSTVRIEDVANVATSFPDYETLARSAGFGLEVYCDPA.

3-phosphoshikimate contacts are provided by K39, S40, and R44. A phosphoenolpyruvate-binding site is contributed by K39. G112 and R140 together coordinate phosphoenolpyruvate. Residues S185, Q187, D333, and K360 each contribute to the 3-phosphoshikimate site. Q187 provides a ligand contact to phosphoenolpyruvate. D333 serves as the catalytic Proton acceptor. Phosphoenolpyruvate is bound by residues R364 and R405.

This sequence belongs to the EPSP synthase family. In terms of assembly, monomer.

The protein resides in the cytoplasm. It carries out the reaction 3-phosphoshikimate + phosphoenolpyruvate = 5-O-(1-carboxyvinyl)-3-phosphoshikimate + phosphate. It participates in metabolic intermediate biosynthesis; chorismate biosynthesis; chorismate from D-erythrose 4-phosphate and phosphoenolpyruvate: step 6/7. Functionally, catalyzes the transfer of the enolpyruvyl moiety of phosphoenolpyruvate (PEP) to the 5-hydroxyl of shikimate-3-phosphate (S3P) to produce enolpyruvyl shikimate-3-phosphate and inorganic phosphate. This chain is 3-phosphoshikimate 1-carboxyvinyltransferase, found in Xylella fastidiosa (strain 9a5c).